Reading from the N-terminus, the 205-residue chain is Thiamine-phosphate synthase (205 aa).

4-amino-2-methyl-5-(diphosphooxymethyl)pyrimidine-binding positions include 34–38 (QLRCK) and asparagine 66. The Mg(2+) site is built by aspartate 67 and aspartate 86. 4-amino-2-methyl-5-(diphosphooxymethyl)pyrimidine is bound at residue serine 105. 131-133 (TTT) contributes to the 2-[(2R,5Z)-2-carboxy-4-methylthiazol-5(2H)-ylidene]ethyl phosphate binding site. Position 134 (lysine 134) interacts with 4-amino-2-methyl-5-(diphosphooxymethyl)pyrimidine. A 2-[(2R,5Z)-2-carboxy-4-methylthiazol-5(2H)-ylidene]ethyl phosphate-binding site is contributed by glycine 163.

It belongs to the thiamine-phosphate synthase family. It depends on Mg(2+) as a cofactor.

It carries out the reaction 2-[(2R,5Z)-2-carboxy-4-methylthiazol-5(2H)-ylidene]ethyl phosphate + 4-amino-2-methyl-5-(diphosphooxymethyl)pyrimidine + 2 H(+) = thiamine phosphate + CO2 + diphosphate. The enzyme catalyses 2-(2-carboxy-4-methylthiazol-5-yl)ethyl phosphate + 4-amino-2-methyl-5-(diphosphooxymethyl)pyrimidine + 2 H(+) = thiamine phosphate + CO2 + diphosphate. It catalyses the reaction 4-methyl-5-(2-phosphooxyethyl)-thiazole + 4-amino-2-methyl-5-(diphosphooxymethyl)pyrimidine + H(+) = thiamine phosphate + diphosphate. Its pathway is cofactor biosynthesis; thiamine diphosphate biosynthesis; thiamine phosphate from 4-amino-2-methyl-5-diphosphomethylpyrimidine and 4-methyl-5-(2-phosphoethyl)-thiazole: step 1/1. Functionally, condenses 4-methyl-5-(beta-hydroxyethyl)thiazole monophosphate (THZ-P) and 2-methyl-4-amino-5-hydroxymethyl pyrimidine pyrophosphate (HMP-PP) to form thiamine monophosphate (TMP). The polypeptide is Thiamine-phosphate synthase (Neisseria gonorrhoeae (strain ATCC 700825 / FA 1090)).